We begin with the raw amino-acid sequence, 143 residues long: Large ribosomal subunit protein uL13 (143 aa).

This sequence belongs to the universal ribosomal protein uL13 family. In terms of assembly, part of the 50S ribosomal subunit.

Functionally, this protein is one of the early assembly proteins of the 50S ribosomal subunit, although it is not seen to bind rRNA by itself. It is important during the early stages of 50S assembly. The sequence is that of Large ribosomal subunit protein uL13 from Prochlorococcus marinus subsp. pastoris (strain CCMP1986 / NIES-2087 / MED4).